The chain runs to 430 residues: Sorting nexin-4 (430 aa).

Positions 1-18 (MDSASADASVTGSGNAKG) are enriched in polar residues. Residues 1–22 (MDSASADASVTGSGNAKGSSAE) form a disordered region. Residues 33–162 (LEILVSDPQK…IFLVGNEWDT (130 aa)) form the PX domain. A 1,2-diacyl-sn-glycero-3-phospho-(1D-myo-inositol-3-phosphate) is bound by residues Arg-83, Lys-109, and Arg-128. Residues 351 to 414 (ASRRDKINKL…NNLADENIKF (64 aa)) adopt a coiled-coil conformation.

It belongs to the sorting nexin family.

It localises to the cytoplasm. It is found in the cytosol. The protein localises to the preautophagosomal structure membrane. The protein resides in the endosome membrane. In terms of biological role, sorting nexin, involved in the separation or division of vacuoles throughout the entire life cycle of the cells. Involved in retrieval of late-Golgi SNAREs from post-Golgi endosomes to the trans-Golgi network, for cytoplasm to vacuole transport (Cvt), and autophagy of large cargos including mitophagy, pexophagy and glycophagy. The chain is Sorting nexin-4 (SNX4) from Candida glabrata (strain ATCC 2001 / BCRC 20586 / JCM 3761 / NBRC 0622 / NRRL Y-65 / CBS 138) (Yeast).